The sequence spans 259 residues: Small ribosomal subunit protein eS4 (259 aa).

An S4 RNA-binding domain is found at 41 to 100 (LPLSLFLRNRLKYALNYTEAKKILTQRVVRVDGKVRTCHKFPTGFMDVVAIERTNEYFRM).

The protein belongs to the eukaryotic ribosomal protein eS4 family.

This is Small ribosomal subunit protein eS4 (rps-4) from Caenorhabditis elegans.